The sequence spans 115 residues: Ribonuclease P protein component 4 (115 aa).

The Zn(2+) site is built by Cys66, Cys69, Cys96, and Cys99.

This sequence belongs to the eukaryotic/archaeal RNase P protein component 4 family. Consists of a catalytic RNA component and at least 4-5 protein subunits. Zn(2+) is required as a cofactor.

The protein localises to the cytoplasm. It carries out the reaction Endonucleolytic cleavage of RNA, removing 5'-extranucleotides from tRNA precursor.. Part of ribonuclease P, a protein complex that generates mature tRNA molecules by cleaving their 5'-ends. In Hyperthermus butylicus (strain DSM 5456 / JCM 9403 / PLM1-5), this protein is Ribonuclease P protein component 4.